We begin with the raw amino-acid sequence, 691 residues long: Elongation factor G 2 (691 aa).

Residues 8–287 (DRYRNIGIMA…AVVDYLPSPL (280 aa)) enclose the tr-type G domain. Residues 17 to 24 (AHIDAGKT), 85 to 89 (DTPGH), and 139 to 142 (NKMD) contribute to the GTP site.

Belongs to the TRAFAC class translation factor GTPase superfamily. Classic translation factor GTPase family. EF-G/EF-2 subfamily.

Its subcellular location is the cytoplasm. Functionally, catalyzes the GTP-dependent ribosomal translocation step during translation elongation. During this step, the ribosome changes from the pre-translocational (PRE) to the post-translocational (POST) state as the newly formed A-site-bound peptidyl-tRNA and P-site-bound deacylated tRNA move to the P and E sites, respectively. Catalyzes the coordinated movement of the two tRNA molecules, the mRNA and conformational changes in the ribosome. The protein is Elongation factor G 2 of Myxococcus xanthus (strain DK1622).